Here is a 440-residue protein sequence, read N- to C-terminus: 3-phosphoshikimate 1-carboxyvinyltransferase (440 aa).

The 3-phosphoshikimate site is built by K25, S26, and R30. K25 contributes to the phosphoenolpyruvate binding site. 2 residues coordinate phosphoenolpyruvate: G96 and R124. 4 residues coordinate 3-phosphoshikimate: S168, Q169, D310, and K337. Q169 lines the phosphoenolpyruvate pocket. D310 (proton acceptor) is an active-site residue. Residues R341, R382, and K409 each contribute to the phosphoenolpyruvate site.

It belongs to the EPSP synthase family. Monomer.

Its subcellular location is the cytoplasm. The catalysed reaction is 3-phosphoshikimate + phosphoenolpyruvate = 5-O-(1-carboxyvinyl)-3-phosphoshikimate + phosphate. Its pathway is metabolic intermediate biosynthesis; chorismate biosynthesis; chorismate from D-erythrose 4-phosphate and phosphoenolpyruvate: step 6/7. Catalyzes the transfer of the enolpyruvyl moiety of phosphoenolpyruvate (PEP) to the 5-hydroxyl of shikimate-3-phosphate (S3P) to produce enolpyruvyl shikimate-3-phosphate and inorganic phosphate. This is 3-phosphoshikimate 1-carboxyvinyltransferase from Chlamydia trachomatis serovar L2 (strain ATCC VR-902B / DSM 19102 / 434/Bu).